Here is a 562-residue protein sequence, read N- to C-terminus: Dihydroxy-acid dehydratase (562 aa).

D80 contacts Mg(2+). Residue C121 coordinates [2Fe-2S] cluster. Mg(2+) is bound by residues D122 and K123. K123 carries the post-translational modification N6-carboxylysine. C194 is a [2Fe-2S] cluster binding site. E446 lines the Mg(2+) pocket. S472 serves as the catalytic Proton acceptor.

The protein belongs to the IlvD/Edd family. As to quaternary structure, homodimer. It depends on [2Fe-2S] cluster as a cofactor. Mg(2+) is required as a cofactor.

It catalyses the reaction (2R)-2,3-dihydroxy-3-methylbutanoate = 3-methyl-2-oxobutanoate + H2O. The enzyme catalyses (2R,3R)-2,3-dihydroxy-3-methylpentanoate = (S)-3-methyl-2-oxopentanoate + H2O. It participates in amino-acid biosynthesis; L-isoleucine biosynthesis; L-isoleucine from 2-oxobutanoate: step 3/4. Its pathway is amino-acid biosynthesis; L-valine biosynthesis; L-valine from pyruvate: step 3/4. In terms of biological role, functions in the biosynthesis of branched-chain amino acids. Catalyzes the dehydration of (2R,3R)-2,3-dihydroxy-3-methylpentanoate (2,3-dihydroxy-3-methylvalerate) into 2-oxo-3-methylpentanoate (2-oxo-3-methylvalerate) and of (2R)-2,3-dihydroxy-3-methylbutanoate (2,3-dihydroxyisovalerate) into 2-oxo-3-methylbutanoate (2-oxoisovalerate), the penultimate precursor to L-isoleucine and L-valine, respectively. In Staphylococcus epidermidis (strain ATCC 35984 / DSM 28319 / BCRC 17069 / CCUG 31568 / BM 3577 / RP62A), this protein is Dihydroxy-acid dehydratase.